Reading from the N-terminus, the 224-residue chain is MTDSRIDFRRAKFLISAPDIAHLDQYLPGDIGVEIAFAGRSNAGKSSALNALTEQKSLARTSKTPGRTQLINVFQLDDDRRLVDLPGYGFAQVPLALKHKWQEALGEYLQKRACLSGVVVLMDIRHPLKDLDMQMIEWAVLSNIPVLALLTKSDKLTQSVKMKTVNDVRAALKEFGDKVQVETLSSLKGTGKPKVLSILNDWCHPEWLAEQKAEQASASELAPE.

In terms of domain architecture, EngB-type G spans 31–205; it reads IGVEIAFAGR…LSILNDWCHP (175 aa). Residues 39–46, 66–70, 84–87, 151–154, and 184–186 each bind GTP; these read GRSNAGKS, GRTQL, DLPG, TKSD, and LSS. Residues Ser-46 and Thr-68 each contribute to the Mg(2+) site.

It belongs to the TRAFAC class TrmE-Era-EngA-EngB-Septin-like GTPase superfamily. EngB GTPase family. Mg(2+) serves as cofactor.

Its function is as follows. Necessary for normal cell division and for the maintenance of normal septation. The chain is Probable GTP-binding protein EngB from Shewanella frigidimarina (strain NCIMB 400).